We begin with the raw amino-acid sequence, 358 residues long: RNA demethylase ALKBH5 (358 aa).

Residues 1–50 (MSATYTDLREKLQSLYRDSPKEVRKRKQPTSDTEEEEAASEPEEEEEARK) are disordered. The span at 7–22 (DLREKLQSLYRDSPKE) shows a compositional bias: basic and acidic residues. Acidic residues predominate over residues 32–46 (DTEEEEAASEPEEEE). Y105 is an active-site residue. Residues N159, Y161, H170, H232, and R243 each contribute to the 2-oxoglutarate site. An intrachain disulfide couples C196 to C233. Disordered stretches follow at residues 259–312 (EMKS…RRSV) and 334–358 (DYVDTYTETGEDDGSPVRKVKMRRH). Over residues 262–278 (SLSSSYQPERLQGSNRQ) the composition is skewed to polar residues. Positions 279–288 (HILKPKRSHR) are enriched in basic residues. Over residues 289 to 310 (KADPDAAHRPRILEMDKEENRR) the composition is skewed to basic and acidic residues.

It belongs to the alkB family. Monomer. Requires Fe(2+) as cofactor.

It localises to the nucleus speckle. It catalyses the reaction an N(6)-methyladenosine in mRNA + 2-oxoglutarate + O2 = an adenosine in mRNA + formaldehyde + succinate + CO2. In terms of biological role, dioxygenase that specifically demethylates N(6)-methyladenosine (m6A) RNA, the most prevalent internal modification of messenger RNA (mRNA) in higher eukaryotes. Demethylates RNA by oxidative demethylation, which requires molecular oxygen, alpha-ketoglutarate and iron. Demethylation of m6A mRNA affects mRNA processing, translation and export. The sequence is that of RNA demethylase ALKBH5 (alkbh5) from Xenopus tropicalis (Western clawed frog).